The chain runs to 282 residues: Small ribosomal subunit protein uS2 (282 aa).

Residues 245–265 (AEEAVEELPLPTGEAQDEASS) are disordered.

Belongs to the universal ribosomal protein uS2 family.

This Chlamydia trachomatis serovar A (strain ATCC VR-571B / DSM 19440 / HAR-13) protein is Small ribosomal subunit protein uS2.